Here is a 57-residue protein sequence, read N- to C-terminus: DELTA-limacoditoxin(2)-Dv11 (57 aa).

An N-terminal signal peptide occupies residues 1 to 24 (MKFAKTFLLLFVVLLLLSIVMAEP).

The protein belongs to the limacoditoxin-2 (cecropin-like) family. As to expression, expressed by the venom secretory cell of the spine. The spine is a cuticular structure containing a single large nucleated venom-secreting cell at its base. It is an independent unit capable of producing, storing and injecting venom. On the back of D.vulnerans caterpillars, spines are grouped together by 50 to 100 to form scoli, of which there are eight in D.vulnerans.

The protein resides in the secreted. Functionally, peptide that induces pain in mammals and has insecticidal, antibacterial and antiparasitic activities. Induces partially reversible paralysis in D.melanogaster when tested at high doses. Shows a moderate antiparasitic activity against the major pathogenic nematode of ruminants (H.contortus, EC(50)=30.5 uM). Has potent or moderate antibacterial activities against A.baumannii (MIC&lt;0.25 ug/mL) and S.aureus (MIC=16 ug/mL). Has no activity on the other bacteria tested, nor on the fungus C.albicans. Strongly induces the increase of intracellular calcium in mice DRG neurons, which is a proxy for neuronal activation that would occur during nociception. This increase is due to influx of extracellular calcium, suggesting that the peptide forms pore or channel in neuronal cell membranes. In addition, intraplantar injection in mice provokes nocifensive behavior, suggesting a pain-inducing activity. This is DELTA-limacoditoxin(2)-Dv11 from Doratifera vulnerans (Mottled cup moth).